We begin with the raw amino-acid sequence, 154 residues long: MSEHERTFVMVKPDGVQRGLIGDIVSRFEDRGLKMVGGKFMQIDQELAEEHYGEHEDKPFFDGLVDFITSGPVFAMVWEGQDATRQVRTMMGETDPAESAPGTIRGDYGLDLGRNVIHGSDHEDEGANEREIELFFDEAELVDWDQIDSSWLYE.

Residues K12, F60, R88, T94, R105, and N115 each contribute to the ATP site. H118 serves as the catalytic Pros-phosphohistidine intermediate.

This sequence belongs to the NDK family. Mg(2+) serves as cofactor.

Its subcellular location is the cytoplasm. It catalyses the reaction a 2'-deoxyribonucleoside 5'-diphosphate + ATP = a 2'-deoxyribonucleoside 5'-triphosphate + ADP. It carries out the reaction a ribonucleoside 5'-diphosphate + ATP = a ribonucleoside 5'-triphosphate + ADP. Major role in the synthesis of nucleoside triphosphates other than ATP. The ATP gamma phosphate is transferred to the NDP beta phosphate via a ping-pong mechanism, using a phosphorylated active-site intermediate. The protein is Nucleoside diphosphate kinase of Haloarcula marismortui (strain ATCC 43049 / DSM 3752 / JCM 8966 / VKM B-1809) (Halobacterium marismortui).